A 391-amino-acid chain; its full sequence is 23S rRNA (uracil(747)-C(5))-methyltransferase RlmC (391 aa).

Positions 5, 13, 16, and 95 each coordinate [4Fe-4S] cluster. The S-adenosyl-L-methionine site is built by Q220, F249, E276, and N322. Catalysis depends on C349, which acts as the Nucleophile.

The protein belongs to the class I-like SAM-binding methyltransferase superfamily. RNA M5U methyltransferase family. RlmC subfamily.

It catalyses the reaction uridine(747) in 23S rRNA + S-adenosyl-L-methionine = 5-methyluridine(747) in 23S rRNA + S-adenosyl-L-homocysteine + H(+). Functionally, catalyzes the formation of 5-methyl-uridine at position 747 (m5U747) in 23S rRNA. This is 23S rRNA (uracil(747)-C(5))-methyltransferase RlmC from Actinobacillus pleuropneumoniae serotype 5b (strain L20).